A 1205-amino-acid chain; its full sequence is Solute carrier family 12 member 2 (1205 aa).

M1 is subject to N-acetylmethionine. A compositionally biased stretch (low complexity) spans 1 to 22 (MEPGPARPRLAPAARPGWGRAA). The disordered stretch occupies residues 1–102 (MEPGPARPRL…AAAAAAAAAA (102 aa)). Topologically, residues 1-279 (MEPGPARPRL…AESKGVVKFG (279 aa)) are cytoplasmic. Over residues 23–35 (GCRRRGGPARHGR) the composition is skewed to basic residues. Residues S74 and S76 each carry the phosphoserine modification. Residues 77 to 80 (RFQV) carry the RFXV motif 1 motif. The span at 87-102 (AGRAAAAAAAAAAAAA) shows a compositional bias: low complexity. Positions 133-136 (RFRV) match the RFXV motif 2 motif. The span at 143-155 (ASSSADDSLSDAA) shows a compositional bias: low complexity. A disordered region spans residues 143–187 (ASSSADDSLSDAAGVGGDGPNVSFQNGGDTVLSEGSSLHSGGGSG). Phosphothreonine is present on residues T196, T200, T205, T210, and T223. The residue at position 235 (S235) is a Phosphoserine. T259 is modified (phosphothreonine). A discontinuously helical transmembrane segment spans residues 280 to 309 (WIKGVLVRCMLNIWGVMLFIRLSWIVGQAG). L290 is a Na(+) binding site. Residues N291 and I292 each contribute to the K(+) site. Position 293 (W293) interacts with Na(+). The chloride site is built by G294, V295, and M296. The helical transmembrane segment at 310–329 (IGLSVVVIAMATVVTTITGL) threads the bilayer. Residues 330-360 (STSAIATNGFVRGGGAYYLISRSLGPEFGGA) lie on the Cytoplasmic side of the membrane. A helical transmembrane segment spans residues 361-388 (IGLIFAFANAVAVAMYVVGFAETVVELL). A chloride-binding site is contributed by F365. K(+) is bound at residue Y376. The Extracellular portion of the chain corresponds to 389–398 (KEHSILMIDE). The chain crosses the membrane as a helical span at residues 399–422 (INDIRIIGAITVVILLGISVAGME). The Cytoplasmic portion of the chain corresponds to 423–425 (WEA). A helical membrane pass occupies residues 426-447 (KAQIVLLVILLLAIADFVIGTF). Residues 448–479 (ISLESKKPKGFFGYKSEIFNENFGPDFREEET) lie on the Extracellular side of the membrane. The discontinuously helical transmembrane segment at 480-497 (FFSVFAIFFPAATGILAG) threads the bilayer. The K(+) site is built by P489, A490, and T492. Residues P489 and A490 each contribute to the chloride site. Positions 493 and 494 each coordinate chloride. Topologically, residues 498-512 (ANISGDLADPQSAIP) are cytoplasmic. A helical transmembrane segment spans residues 513–534 (KGTLLAILITTVVYIGIAVSVG). Topologically, residues 535–591 (SCVVRDATGNVNDTITTELTNCTSAACKLNFDFSYCESNTCSYGLMNNFQVMSMVSG) are extracellular. N546 and N555 each carry an N-linked (GlcNAc...) asparagine glycan. 2 disulfide bridges follow: C556–C561 and C570–C575. The helical transmembrane segment at 592-616 (FAPLISAGIFSATLSSALASLVSAP) threads the bilayer. The Na(+) site is built by A603, S606, and S607. The Cytoplasmic portion of the chain corresponds to 617–644 (KIFQALCKDNIYPAFQMFAKGYGKNNEP). 2 helical membrane passes run 645–665 (LRGY…AELN) and 666–684 (VIAP…LINF). Chloride is bound by residues F675 and Y679. Residues 685 to 707 (SVFHASLAKSPGWRPAFKYYNMW) lie on the Cytoplasmic side of the membrane. The next 2 membrane-spanning stretches (helical) occupy residues 708-725 (ISLI…VINW) and 726-738 (WAAL…VLGL). Topologically, residues 739–1205 (YIYVTYKKPD…NHQSVLTFYS (467 aa)) are cytoplasmic. Residues 754-771 (STQALTYLSALQHSIRLS) form a scissor helix region. 2 positions are modified to phosphoserine: S933 and S937. Positions 953–986 (SDQDTCKSSGEKSITQKDEEEDGKTPTQPLLKKE) are disordered. S987 carries the post-translational modification Phosphoserine.

It belongs to the SLC12A transporter family. Homodimer; adopts a domain-swap conformation at the scissor helices connecting the transmembrane domain and C-terminal domain. In terms of processing, phosphorylated at Thr-196, Thr-200 and Thr-205 by OXSR1/OSR1 and STK39/SPAK downstream of WNK kinases (WNK1, WNK2, WNK3 or WNK4), promoting its activity. As to expression, widely expressed. High expression found in the cochlea, cochlear lateral wall, and the choroid plexus. Lower expression found in the cerebellum and the cortex.

It localises to the basolateral cell membrane. It catalyses the reaction K(+)(out) + 2 chloride(out) + Na(+)(out) = K(+)(in) + 2 chloride(in) + Na(+)(in). Activated following phosphorylation by OXSR1/OSR1 and STK39/SPAK downstream of WNK kinases (WNK1, WNK2, WNK3 or WNK4). Inhibited by bumetanide and furosemide. Functionally, cation-chloride cotransporter which mediates the electroneutral transport of chloride, potassium and/or sodium ions across the membrane. Plays a vital role in the regulation of ionic balance and cell volume. The chain is Solute carrier family 12 member 2 (Slc12a2) from Mus musculus (Mouse).